We begin with the raw amino-acid sequence, 1262 residues long: Structural maintenance of chromosomes protein 1 (1262 aa).

Residues 171 to 497 (SRSHEFQAEY…VAVVRQLSEA (327 aa)) adopt a coiled-coil conformation. The SMC hinge domain occupies 524–642 (SVYGRLVDLC…ESQEDAKQLA (119 aa)). Residues 680-937 (KKWDEKVVKQ…RLESLLTKKQ (258 aa)) adopt a coiled-coil conformation. The interval 965-994 (EYEEDDGDDTASQSSQSATDGPSVSEEQIQ) is disordered. Polar residues predominate over residues 974 to 991 (TASQSSQSATDGPSVSEE). Positions 1017–1086 (DGVRQMSNRL…QQFEKVKTDR (70 aa)) form a coiled coil. The DA-box signature appears at 1148 to 1183 (LSGGEKTIAALALLFAVHGRNPAPFFVLDEIDAALD).

This sequence belongs to the SMC family. SMC1 subfamily. In terms of assembly, component of the cohesin complex, composed of the smc-1 and smc-3 heterodimer attached via their SMC hinge domain, scc-1 which links them, and scc-3. Interacts with smc-3, scc-1, scc-3 and tim-1.

Its subcellular location is the nucleus. The protein localises to the chromosome. Its function is as follows. Involved in chromosome cohesion during cell cycle and in DNA repair. Required for chromosome segregation during mitosis. Central component of cohesin complex. The cohesin complex is required for the cohesion of sister chromatids after DNA replication. The cohesin complex apparently forms a large proteinaceous ring within which sister chromatids can be trapped. At anaphase, the complex is cleaved and dissociates from chromatin, allowing sister chromatids to segregate. The sequence is that of Structural maintenance of chromosomes protein 1 from Caenorhabditis elegans.